Here is a 109-residue protein sequence, read N- to C-terminus: Cell division protein ZapA (109 aa).

Residues 21-97 adopt a coiled-coil conformation; the sequence is PDQRDALNQA…QTIEQALLDQ (77 aa).

It belongs to the ZapA family. Type 1 subfamily. Homodimer. Interacts with FtsZ.

It localises to the cytoplasm. Activator of cell division through the inhibition of FtsZ GTPase activity, therefore promoting FtsZ assembly into bundles of protofilaments necessary for the formation of the division Z ring. It is recruited early at mid-cell but it is not essential for cell division. The sequence is that of Cell division protein ZapA from Salmonella agona (strain SL483).